The primary structure comprises 1427 residues: Tonsoku-like protein (1427 aa).

The tract at residues 1–21 (MTSTKEIKQLQKAKSKAQSSN) is disordered. Residues 10-21 (LQKAKSKAQSSN) are compositionally biased toward low complexity. TPR repeat units follow at residues 27–60 (ASLC…SEIL), 67–100 (AVAN…ARSV), 107–147 (QRAL…VDER), 162–195 (ARLL…AEKN), 202–235 (YRAN…ARKM), 242–275 (SECF…GSQQ), 311–344 (LDLS…AEAL), and 352–385 (AVIH…RKGN). The disordered stretch occupies residues 465–502 (LSLDQSEDEDEEDEVDNSEPLEDSDIQYSESDDEDLEG). Positions 469 to 501 (QSEDEDEEDEVDNSEPLEDSDIQYSESDDEDLE) are enriched in acidic residues. ANK repeat units follow at residues 522–551 (KGET…PVNV), 555–584 (CGWT…NVND), and 591–620 (GGIT…SVTV). 3 disordered regions span residues 692 to 801 (PLLR…SESG), 865 to 922 (KKKR…KMNQ), and 941 to 961 (IMTQ…QAMP). Over residues 742–761 (DDSSSSDNPDSDCSLSPLRP) the composition is skewed to low complexity. A compositionally biased stretch (polar residues) spans 773–783 (SPQEVPSSQEL). Positions 871–880 (SEHNATRETT) are enriched in basic and acidic residues. The span at 881 to 890 (SRSQNNSSTI) shows a compositional bias: polar residues. Low complexity predominate over residues 899-910 (SCSSRGSLSLKK). LRR repeat units lie at residues 1113–1137 (QASL…MMAA), 1141–1168 (MPRL…AFET), 1174–1197 (FPCL…ALAS), 1234–1258 (TGNM…VLKT), 1293–1316 (DCPL…LLAR), 1321–1346 (CPSL…LLNG), and 1377–1400 (SDHI…ALQQ).

The protein belongs to the Tonsoku family. As to quaternary structure, component of the MMS22L-TONSL complex. Binds histones, with a strong preference for histone H3.1 (histones H3.1 and H3-4/H3.1t).

Its subcellular location is the nucleus. It localises to the chromosome. It is found in the cytoplasm. In terms of biological role, component of the MMS22L-TONSL complex, a complex that promotes homologous recombination-mediated repair of double-strand breaks (DSBs) at stalled or collapsed replication forks. The MMS22L-TONSL complex is required to maintain genome integrity during DNA replication. It mediates the assembly of RAD51 filaments on single-stranded DNA (ssDNA): the MMS22L-TONSL complex is recruited to DSBs following histone replacement by histone chaperones and eviction of the replication protein A complex (RPA/RP-A) from DSBs. Following recruitment to DSBs, the TONSL-MMS22L complex promotes recruitment of RAD51 filaments and subsequent homologous recombination. Within the complex, TONSL acts as a histone reader, which recognizes and binds newly synthesized histones following their replacement by histone chaperones. In Danio rerio (Zebrafish), this protein is Tonsoku-like protein (tonsl).